Consider the following 351-residue polypeptide: Protein-glutamate methylesterase/protein-glutamine glutaminase (351 aa).

Residues 8-125 (TVVVVDDSLT…GEDPFAGLGD (118 aa)) enclose the Response regulatory domain. D59 carries the 4-aspartylphosphate modification. One can recognise a CheB-type methylesterase domain in the interval 151 to 345 (PKIGTVVGIG…PAILNLCERR (195 aa)). Residues S162, H188, and D287 contribute to the active site.

The protein belongs to the CheB family. Phosphorylated by CheA. Phosphorylation of the N-terminal regulatory domain activates the methylesterase activity.

The protein localises to the cytoplasm. It catalyses the reaction [protein]-L-glutamate 5-O-methyl ester + H2O = L-glutamyl-[protein] + methanol + H(+). The catalysed reaction is L-glutaminyl-[protein] + H2O = L-glutamyl-[protein] + NH4(+). Functionally, involved in chemotaxis. Part of a chemotaxis signal transduction system that modulates chemotaxis in response to various stimuli. Catalyzes the demethylation of specific methylglutamate residues introduced into the chemoreceptors (methyl-accepting chemotaxis proteins or MCP) by CheR. Also mediates the irreversible deamidation of specific glutamine residues to glutamic acid. In Gluconobacter oxydans (strain 621H) (Gluconobacter suboxydans), this protein is Protein-glutamate methylesterase/protein-glutamine glutaminase.